We begin with the raw amino-acid sequence, 273 residues long: Proteasome subunit beta type-5-B (273 aa).

The propeptide at 1 to 57 is removed in mature form; it reads MKLDTSGLETTMPVIGFGSNSEMLDGFSSAPSFDLPRTTDFDGFQKKAVEMVKPAKG. Thr-58 functions as the Nucleophile in the catalytic mechanism.

The protein belongs to the peptidase T1B family. In terms of assembly, component of the 20S core complex of the 26S proteasome. The 26S proteasome is composed of a core protease (CP), known as the 20S proteasome, capped at one or both ends by the 19S regulatory particle (RP/PA700). The 20S proteasome core is composed of 28 subunits that are arranged in four stacked rings, resulting in a barrel-shaped structure. The two end rings are each formed by seven alpha subunits, and the two central rings are each formed by seven beta subunits. The catalytic chamber with the active sites is on the inside of the barrel.

The protein localises to the cytoplasm. The protein resides in the nucleus. The catalysed reaction is Cleavage of peptide bonds with very broad specificity.. The proteasome is a multicatalytic proteinase complex which is characterized by its ability to cleave peptides with Arg, Phe, Tyr, Leu, and Glu adjacent to the leaving group at neutral or slightly basic pH. The proteasome has an ATP-dependent proteolytic activity. This is Proteasome subunit beta type-5-B (PBE2) from Arabidopsis thaliana (Mouse-ear cress).